We begin with the raw amino-acid sequence, 385 residues long: 8-amino-7-oxononanoate synthase (385 aa).

Arginine 21 is a substrate binding site. Pyridoxal 5'-phosphate is bound at residue glycine 108–phenylalanine 109. Histidine 133 is a binding site for substrate. Residues serine 179, histidine 207, and threonine 233 each contribute to the pyridoxal 5'-phosphate site. An N6-(pyridoxal phosphate)lysine modification is found at lysine 236. A substrate-binding site is contributed by threonine 352.

This sequence belongs to the class-II pyridoxal-phosphate-dependent aminotransferase family. BioF subfamily. In terms of assembly, homodimer. Pyridoxal 5'-phosphate serves as cofactor.

The catalysed reaction is 6-carboxyhexanoyl-[ACP] + L-alanine + H(+) = (8S)-8-amino-7-oxononanoate + holo-[ACP] + CO2. It functions in the pathway cofactor biosynthesis; biotin biosynthesis. In terms of biological role, catalyzes the decarboxylative condensation of pimeloyl-[acyl-carrier protein] and L-alanine to produce 8-amino-7-oxononanoate (AON), [acyl-carrier protein], and carbon dioxide. This is 8-amino-7-oxononanoate synthase from Salmonella paratyphi A (strain ATCC 9150 / SARB42).